A 1458-amino-acid polypeptide reads, in one-letter code: RNA-directed RNA polymerase P1 (1458 aa).

Positions 148–168 are disordered; the sequence is LSQDDRDEKGNDNREEEDVKN. In terms of domain architecture, RdRp catalytic spans 686 to 894; it reads VGIGFATIYQ…KTVISHISGE (209 aa). Residues 971–993 are disordered; sequence DESIENKPNRRGSKAKARSTKTN. The span at 979-989 shows a compositional bias: basic residues; the sequence is NRRGSKAKARS.

Belongs to the reoviridae RNA-directed RNA polymerase family.

The protein resides in the virion. It is found in the host cytoplasm. It catalyses the reaction RNA(n) + a ribonucleoside 5'-triphosphate = RNA(n+1) + diphosphate. Its function is as follows. RNA-directed RNA polymerase that is involved in both transcription and genome replication. Together with the capping enzyme P5 and protein P7, forms an enzyme complex positioned near the channels situated at each of the five-fold vertices of the core. This chain is RNA-directed RNA polymerase P1, found in Nephotettix cincticeps (Green rice leafhopper).